A 325-amino-acid polypeptide reads, in one-letter code: dITP/XTP pyrophosphatase (325 aa).

The tract at residues 1 to 128 (MKEKIYEYKD…KKVSELGDTI (128 aa)) is unknown. Positions 129 to 324 (LIATRNEGKT…MEVFPAWQNA (196 aa)) are NTP pyrophosphatase. 132-137 (TRNEGK) lines the substrate pocket. The Mg(2+) site is built by E165 and D194. D194 functions as the Proton acceptor in the catalytic mechanism. Residues S195, 278–281 (FGYD), K301, and 306–307 (HR) each bind substrate.

It belongs to the HAM1 NTPase family. As to quaternary structure, homodimer. The cofactor is Mg(2+).

It carries out the reaction XTP + H2O = XMP + diphosphate + H(+). It catalyses the reaction dITP + H2O = dIMP + diphosphate + H(+). The catalysed reaction is ITP + H2O = IMP + diphosphate + H(+). In terms of biological role, pyrophosphatase that catalyzes the hydrolysis of nucleoside triphosphates to their monophosphate derivatives, with a high preference for the non-canonical purine nucleotides XTP (xanthosine triphosphate), dITP (deoxyinosine triphosphate) and ITP. Seems to function as a house-cleaning enzyme that removes non-canonical purine nucleotides from the nucleotide pool, thus preventing their incorporation into DNA/RNA and avoiding chromosomal lesions. The sequence is that of dITP/XTP pyrophosphatase from Streptococcus mutans serotype c (strain ATCC 700610 / UA159).